A 462-amino-acid polypeptide reads, in one-letter code: tRNA modification GTPase MnmE (462 aa).

(6S)-5-formyl-5,6,7,8-tetrahydrofolate is bound by residues arginine 27, glutamate 89, and arginine 128. A TrmE-type G domain is found at 223–383 (GLKIAIVGRP…LEAAILAAVG (161 aa)). Asparagine 233 provides a ligand contact to K(+). GTP contacts are provided by residues 233–238 (NVGKSS), 252–258 (TDLPGTT), and 277–280 (DTAG). Serine 237 lines the Mg(2+) pocket. The K(+) site is built by threonine 252, leucine 254, and threonine 257. Mg(2+) is bound at residue threonine 258. Lysine 462 serves as a coordination point for (6S)-5-formyl-5,6,7,8-tetrahydrofolate.

This sequence belongs to the TRAFAC class TrmE-Era-EngA-EngB-Septin-like GTPase superfamily. TrmE GTPase family. As to quaternary structure, homodimer. Heterotetramer of two MnmE and two MnmG subunits. K(+) serves as cofactor.

Its subcellular location is the cytoplasm. Exhibits a very high intrinsic GTPase hydrolysis rate. Involved in the addition of a carboxymethylaminomethyl (cmnm) group at the wobble position (U34) of certain tRNAs, forming tRNA-cmnm(5)s(2)U34. The protein is tRNA modification GTPase MnmE of Synechococcus elongatus (strain ATCC 33912 / PCC 7942 / FACHB-805) (Anacystis nidulans R2).